We begin with the raw amino-acid sequence, 166 residues long: Urease accessory protein UreE (166 aa).

This sequence belongs to the UreE family.

The protein resides in the cytoplasm. In terms of biological role, involved in urease metallocenter assembly. Binds nickel. Probably functions as a nickel donor during metallocenter assembly. This is Urease accessory protein UreE from Pseudomonas savastanoi pv. phaseolicola (strain 1448A / Race 6) (Pseudomonas syringae pv. phaseolicola (strain 1448A / Race 6)).